Here is a 189-residue protein sequence, read N- to C-terminus: MyoD family inhibitor domain-containing protein 2 (189 aa).

Positions lysine 28–tyrosine 188 constitute an MDFI domain.

This sequence belongs to the MDFI family.

In Homo sapiens (Human), this protein is MyoD family inhibitor domain-containing protein 2.